The following is a 222-amino-acid chain: Large ribosomal subunit protein uL4 (222 aa).

This sequence belongs to the universal ribosomal protein uL4 family. Part of the 50S ribosomal subunit.

Its function is as follows. One of the primary rRNA binding proteins, this protein initially binds near the 5'-end of the 23S rRNA. It is important during the early stages of 50S assembly. It makes multiple contacts with different domains of the 23S rRNA in the assembled 50S subunit and ribosome. In terms of biological role, forms part of the polypeptide exit tunnel. In Methylacidiphilum infernorum (isolate V4) (Methylokorus infernorum (strain V4)), this protein is Large ribosomal subunit protein uL4.